The chain runs to 293 residues: Extracellular metalloprotease MGYG_00389 (293 aa).

The N-terminal stretch at 1–19 (MRFSVFLPAIAALSSAVAA) is a signal peptide. Asn-49 and Asn-53 each carry an N-linked (GlcNAc...) asparagine glycan. A Zn(2+)-binding site is contributed by His-184. Residue Glu-185 is part of the active site. Residue His-188 participates in Zn(2+) binding. Cys-223 and Cys-249 are joined by a disulfide. The interval 270–293 (GSGSGSVTRPRPKPPVLMDYEHRL) is disordered.

It belongs to the peptidase M43B family.

Its subcellular location is the secreted. Functionally, secreted metalloproteinase that allows assimilation of proteinaceous substrates. Plays a pivotal role as a pathogenicity determinant during infections and contributes to the ability of the pathogen to persist within the mammalian host. This chain is Extracellular metalloprotease MGYG_00389, found in Arthroderma gypseum (strain ATCC MYA-4604 / CBS 118893) (Microsporum gypseum).